The chain runs to 87 residues: uncharacterized protein (87 aa).

To B.subtilis XkdR.

This is an uncharacterized protein from Bacillus subtilis (strain 168).